Here is a 134-residue protein sequence, read N- to C-terminus: Small ribosomal subunit protein uS12 (134 aa).

The disordered stretch occupies residues 1–27; it reads MPTIQQLVRKGRESFADKSKSPALNSC. Residues 10–20 are compositionally biased toward basic and acidic residues; the sequence is KGRESFADKSK. At Asp89 the chain carries 3-methylthioaspartic acid. Positions 103 to 134 are disordered; sequence DTAGVNGRTQRRSKYGAKRPKPGQAPAAKGKK. The span at 111-123 shows a compositional bias: basic residues; sequence TQRRSKYGAKRPK. Over residues 124–134 the composition is skewed to low complexity; sequence PGQAPAAKGKK.

The protein belongs to the universal ribosomal protein uS12 family. As to quaternary structure, part of the 30S ribosomal subunit. Contacts proteins S8 and S17. May interact with IF1 in the 30S initiation complex.

In terms of biological role, with S4 and S5 plays an important role in translational accuracy. Functionally, interacts with and stabilizes bases of the 16S rRNA that are involved in tRNA selection in the A site and with the mRNA backbone. Located at the interface of the 30S and 50S subunits, it traverses the body of the 30S subunit contacting proteins on the other side and probably holding the rRNA structure together. The combined cluster of proteins S8, S12 and S17 appears to hold together the shoulder and platform of the 30S subunit. In Porphyromonas gingivalis (strain ATCC 33277 / DSM 20709 / CIP 103683 / JCM 12257 / NCTC 11834 / 2561), this protein is Small ribosomal subunit protein uS12.